The following is a 204-amino-acid chain: Flavin-dependent thymidylate synthase (204 aa).

Positions 1–204 (MTVTLMQHTS…RYLFCLNQEG (204 aa)) constitute a ThyX domain. Residues Ser50 and 74 to 76 (RHR) each bind FAD. Residues 71–74 (ELAR), 84–86 (SSR), and Lys143 each bind dUMP. Positions 74 to 84 (RHRIASLSVKS) match the ThyX motif motif. FAD is bound by residues 159–161 (NAR) and Asn165. Arg170 serves as a coordination point for dUMP. The active-site Involved in ionization of N3 of dUMP, leading to its activation is Arg170.

The protein belongs to the thymidylate synthase ThyX family. Homotetramer. FAD is required as a cofactor.

The enzyme catalyses dUMP + (6R)-5,10-methylene-5,6,7,8-tetrahydrofolate + NADPH + H(+) = dTMP + (6S)-5,6,7,8-tetrahydrofolate + NADP(+). Its pathway is pyrimidine metabolism; dTTP biosynthesis. In terms of biological role, catalyzes the reductive methylation of 2'-deoxyuridine-5'-monophosphate (dUMP) to 2'-deoxythymidine-5'-monophosphate (dTMP) while utilizing 5,10-methylenetetrahydrofolate (mTHF) as the methyl donor, and NADPH and FADH(2) as the reductant. In Wolinella succinogenes (strain ATCC 29543 / DSM 1740 / CCUG 13145 / JCM 31913 / LMG 7466 / NCTC 11488 / FDC 602W) (Vibrio succinogenes), this protein is Flavin-dependent thymidylate synthase.